A 742-amino-acid chain; its full sequence is Clamp-binding protein CrfC (742 aa).

The segment at 41–45 is clamp-binding consensus; it reads QLALP. Residues 66–402 form the Dynamin-type G domain; it reads SRLEMVLAIV…LWEDSLFAQP (337 aa). Residues 76 to 83 are G1 motif; the sequence is GTMKAGKS. The interval 102–104 is G2 motif; that stretch reads MTA. Residues 236–239 are G3 motif; sequence DTPG. Residues 297–300 are G4 motif; sequence NKFD. Residues 331 to 334 are G5 motif; it reads FPVS. Positions 440–472 form a coiled coil; that stretch reads RAHGLNVACEQLRQNIHQIEESLQLLQLNQAQV.

It belongs to the TRAFAC class dynamin-like GTPase superfamily. Dynamin/Fzo/YdjA family. In terms of assembly, forms homooligomers. Binds to the beta sliding clamp processivity factor (DnaN) in the presence and absence of DNA, may bind to the clamp itself as homodimers or trimers. Homooligomers may be able to bind more than 1 clamp complex.

The protein localises to the cytoplasm. In terms of biological role, important for the colocalization of sister nascent DNA strands after replication fork passage during DNA replication, and for positioning and subsequent partitioning of sister chromosomes. Does not have GTPase activity on its own. The protein is Clamp-binding protein CrfC (crfC) of Escherichia coli (strain K12).